Here is a 309-residue protein sequence, read N- to C-terminus: Replication factor C subunit 4 (309 aa).

ATP-binding positions include valine 5, valine 17, 42–50 (GPPGTGKTT), asparagine 134, and arginine 192.

The protein belongs to the activator 1 small subunits family. As to quaternary structure, component of the replication factor C (RFC) complex.

The protein resides in the nucleus. Component of ATP-dependent clamp loader (RFC and RFC-like) complexes for DNA clamps. During a clamp loading circle, the RFC:clamp complex binds to DNA and the recognition of the double-stranded/single-stranded junction stimulates ATP hydrolysis by RFC. The complex presumably provides bipartite ATP sites in which one subunit supplies a catalytic site for hydrolysis of ATP bound to the neighboring subunit. Dissociation of RFC from the clamp leaves the clamp encircling DNA. Component of the replication factor C (RFC or activator 1) complex which acts during elongation of primed DNA templates by DNA polymerase delta and epsilon. RFC has an essential but redundant activity in sister chromatid cohesion establishment. This chain is Replication factor C subunit 4 (RFC4), found in Encephalitozoon cuniculi (strain GB-M1) (Microsporidian parasite).